A 300-amino-acid chain; its full sequence is Large ribosomal subunit protein uL18 (300 aa).

Positions 246–267 (NIRSDPKRDRKPKKDVSKEPKR) are enriched in basic and acidic residues. The segment at 246-276 (NIRSDPKRDRKPKKDVSKEPKRWNAKKLTNA) is disordered.

The protein belongs to the universal ribosomal protein uL18 family. In terms of assembly, component of the large ribosomal subunit (LSU).

The protein localises to the cytoplasm. It is found in the nucleus. Its function is as follows. Component of the ribosome, a large ribonucleoprotein complex responsible for the synthesis of proteins in the cell. The small ribosomal subunit (SSU) binds messenger RNAs (mRNAs) and translates the encoded message by selecting cognate aminoacyl-transfer RNA (tRNA) molecules. The large subunit (LSU) contains the ribosomal catalytic site termed the peptidyl transferase center (PTC), which catalyzes the formation of peptide bonds, thereby polymerizing the amino acids delivered by tRNAs into a polypeptide chain. The nascent polypeptides leave the ribosome through a tunnel in the LSU and interact with protein factors that function in enzymatic processing, targeting, and the membrane insertion of nascent chains at the exit of the ribosomal tunnel. This Toxoptera citricida (Brown citrus aphid) protein is Large ribosomal subunit protein uL18 (RpL5).